The sequence spans 351 residues: Phospho-N-acetylmuramoyl-pentapeptide-transferase (351 aa).

The next 10 membrane-spanning stretches (helical) occupy residues 17–37 (MAYA…HIIL), 62–82 (GIPT…LVFW), 85–105 (ILNV…FLGF), 130–150 (IIFS…HVSI), 163–183 (LGVF…NSFN), 190–210 (GLAI…AYIT), 230–250 (LVIF…FNAY), 254–274 (IMMG…TALI), 281–301 (FSIL…QVIV), and 328–348 (QVVI…LSTI).

It belongs to the glycosyltransferase 4 family. MraY subfamily. The cofactor is Mg(2+).

It localises to the cell inner membrane. It carries out the reaction UDP-N-acetyl-alpha-D-muramoyl-L-alanyl-gamma-D-glutamyl-meso-2,6-diaminopimeloyl-D-alanyl-D-alanine + di-trans,octa-cis-undecaprenyl phosphate = di-trans,octa-cis-undecaprenyl diphospho-N-acetyl-alpha-D-muramoyl-L-alanyl-D-glutamyl-meso-2,6-diaminopimeloyl-D-alanyl-D-alanine + UMP. It participates in cell wall biogenesis; peptidoglycan biosynthesis. Catalyzes the initial step of the lipid cycle reactions in the biosynthesis of the cell wall peptidoglycan: transfers peptidoglycan precursor phospho-MurNAc-pentapeptide from UDP-MurNAc-pentapeptide onto the lipid carrier undecaprenyl phosphate, yielding undecaprenyl-pyrophosphoryl-MurNAc-pentapeptide, known as lipid I. This Borreliella afzelii (strain PKo) (Borrelia afzelii) protein is Phospho-N-acetylmuramoyl-pentapeptide-transferase.